The chain runs to 411 residues: Dual-specificity RNA methyltransferase RlmN (411 aa).

The active-site Proton acceptor is Glu125. The Radical SAM core domain maps to 131–380; it reads EEGRGTLCVS…IRTPRGRDIL (250 aa). A disulfide bridge links Cys138 with Cys383. Residues Cys145, Cys149, and Cys152 each contribute to the [4Fe-4S] cluster site. S-adenosyl-L-methionine is bound by residues 209–210, Ser241, 263–265, and Asn340; these read GE and SLH. Residue Cys383 is the S-methylcysteine intermediate of the active site.

It belongs to the radical SAM superfamily. RlmN family. Requires [4Fe-4S] cluster as cofactor.

It is found in the cytoplasm. It catalyses the reaction adenosine(2503) in 23S rRNA + 2 reduced [2Fe-2S]-[ferredoxin] + 2 S-adenosyl-L-methionine = 2-methyladenosine(2503) in 23S rRNA + 5'-deoxyadenosine + L-methionine + 2 oxidized [2Fe-2S]-[ferredoxin] + S-adenosyl-L-homocysteine. It carries out the reaction adenosine(37) in tRNA + 2 reduced [2Fe-2S]-[ferredoxin] + 2 S-adenosyl-L-methionine = 2-methyladenosine(37) in tRNA + 5'-deoxyadenosine + L-methionine + 2 oxidized [2Fe-2S]-[ferredoxin] + S-adenosyl-L-homocysteine. In terms of biological role, specifically methylates position 2 of adenine 2503 in 23S rRNA and position 2 of adenine 37 in tRNAs. m2A2503 modification seems to play a crucial role in the proofreading step occurring at the peptidyl transferase center and thus would serve to optimize ribosomal fidelity. This Brucella anthropi (strain ATCC 49188 / DSM 6882 / CCUG 24695 / JCM 21032 / LMG 3331 / NBRC 15819 / NCTC 12168 / Alc 37) (Ochrobactrum anthropi) protein is Dual-specificity RNA methyltransferase RlmN.